A 992-amino-acid chain; its full sequence is Leucine-rich repeat receptor-like serine/threonine-protein kinase BAM3 (992 aa).

Residues 1–21 (MADKIFTFFLILSSISPLLCS) form the signal peptide. Residues 22–656 (SLISPLNLSL…ARSRGEISAK (635 aa)) are Extracellular-facing. Residue Asn28 is glycosylated (N-linked (GlcNAc...) asparagine). A disulfide bridge links Cys64 with Cys71. N-linked (GlcNAc...) asparagine glycosylation is found at Asn75 and Asn87. LRR repeat units lie at residues 75–99 (NQSI…ISRL), 100–124 (SPSL…IYEL), 126–148 (GLEV…GFSQ), 150–173 (TQLV…LTTL), 174–199 (TRLE…SFLS), and 201–221 (KFLS…LANI). Residues Asn131 and Asn163 are each glycosylated (N-linked (GlcNAc...) asparagine). Residue Asn220 is glycosylated (N-linked (GlcNAc...) asparagine). The CLE45 peptide binding signature appears at 226–231 (QLYLGY). 15 LRR repeats span residues 246–270 (LINL…LGNL), 271–294 (KNLE…LGNM), 296–320 (SLKT…GLQK), 322–342 (QLFN…VSEL), 343–366 (PDLQ…LGSN), 368–391 (NLIE…CFGR), 393–414 (LKIL…LGQC), 415–438 (EPLW…LIYL), 439–462 (PNLS…EAGN), 465–489 (FSSL…IRNL), 491–513 (SLQI…IGSL), 514–536 (KSLL…EFGD), 537–561 (CMSL…ISQI), 563–585 (ILNY…LGYM), and 586–610 (KSLT…QFSY). N-linked (GlcNAc...) asparagine glycosylation is found at Asn256 and Asn293. The N-linked (GlcNAc...) asparagine glycan is linked to Asn354. 2 N-linked (GlcNAc...) asparagine glycosylation sites follow: Asn440 and Asn472. N-linked (GlcNAc...) asparagine glycosylation is present at Asn525. 6 N-linked (GlcNAc...) asparagine glycosylation sites follow: Asn568, Asn575, Asn597, Asn613, Asn631, and Asn635. The chain crosses the membrane as a helical span at residues 657–677 (FKLFFGLGLLGFFLVFVVLAV). Residues 678 to 992 (VKNRRMRKNN…ISQAKQPNTF (315 aa)) are Cytoplasmic-facing. The 283-residue stretch at 710–992 (VKENHVIGKG…ISQAKQPNTF (283 aa)) folds into the Protein kinase domain. Residues 716 to 724 (IGKGGRGIV) and Lys738 contribute to the ATP site. Catalysis depends on Asp836, which acts as the Proton acceptor.

It belongs to the protein kinase superfamily. Ser/Thr protein kinase family. As to quaternary structure, interacts with CLE45, especially in roots. Binds to the dimer CLV2/CRN. As to expression, expressed in seedlings, roots, leaves, stems, inflorescences, flowers and siliques. In roots, confined to protophloem and sieve element precursor cells.

The protein resides in the cell membrane. It localises to the endoplasmic reticulum membrane. It catalyses the reaction L-seryl-[protein] + ATP = O-phospho-L-seryl-[protein] + ADP + H(+). The catalysed reaction is L-threonyl-[protein] + ATP = O-phospho-L-threonyl-[protein] + ADP + H(+). Functionally, necessary for male gametophyte development, as well as ovule specification and function. Required for the development of high-ordered vascular strands within the leaf and a correlated control of leaf shape, size and symmetry. LRR-rich receptor-like kinase (LRR-RLK) involved in the perception of CLE45 peptide ligand which mediates root growth inhibition by repressing protophloem differentiation; this mechanism requires CRN. BRX, BAM3, and CLE45 act together to regulate the transition of protophloem cells from proliferation to differentiation, thus impinging on postembryonic growth capacity of the root meristem. Necessary for CLE45 peptide-triggered accumulation of MAKR5 in developing sieve elements. The protein is Leucine-rich repeat receptor-like serine/threonine-protein kinase BAM3 of Arabidopsis thaliana (Mouse-ear cress).